Consider the following 504-residue polypeptide: Peptidyl-prolyl cis-trans isomerase CYP57 (504 aa).

Ser-2 is subject to N-acetylserine. The 152-residue stretch at 16–167 (IVNTTHGPID…DPAPKILSVE (152 aa)) folds into the PPIase cyclophilin-type domain. Residues 204–274 (NLLSFGEEAE…AKKEAAQKDK (71 aa)) are a coiled coil. 3 stretches are compositionally biased toward basic and acidic residues: residues 237–275 (RLLK…KDKS), 344–354 (EDEKPRMEKLS), and 364–374 (AKAEHMEKGDT). Disordered regions lie at residues 237-374 (RLLK…KGDT), 416-441 (AKPF…KEED), and 482-504 (EKFN…KSLA). Positions 416–434 (AKPFTSSNEPVVLTSSSEP) are enriched in polar residues. Basic and acidic residues predominate over residues 494 to 504 (REREWSGKSLA).

Belongs to the cyclophilin-type PPIase family. Ubiquitous.

The protein resides in the nucleus. The protein localises to the cytoplasm. The catalysed reaction is [protein]-peptidylproline (omega=180) = [protein]-peptidylproline (omega=0). In terms of biological role, PPIases accelerate the folding of proteins. It catalyzes the cis-trans isomerization of proline imidic peptide bonds in oligopeptides. Involved in plant response to pathogen infection by increasing PAD4 expression in absence of EDS1 up-regulation. The chain is Peptidyl-prolyl cis-trans isomerase CYP57 (CYP57) from Arabidopsis thaliana (Mouse-ear cress).